A 201-amino-acid chain; its full sequence is 3-isopropylmalate dehydratase small subunit (201 aa).

Belongs to the LeuD family. LeuD type 1 subfamily. In terms of assembly, heterodimer of LeuC and LeuD.

It catalyses the reaction (2R,3S)-3-isopropylmalate = (2S)-2-isopropylmalate. The protein operates within amino-acid biosynthesis; L-leucine biosynthesis; L-leucine from 3-methyl-2-oxobutanoate: step 2/4. In terms of biological role, catalyzes the isomerization between 2-isopropylmalate and 3-isopropylmalate, via the formation of 2-isopropylmaleate. This chain is 3-isopropylmalate dehydratase small subunit, found in Allorhizobium ampelinum (strain ATCC BAA-846 / DSM 112012 / S4) (Agrobacterium vitis (strain S4)).